The primary structure comprises 576 residues: Quinone-reactive Ni/Fe-hydrogenase large chain (576 aa).

Positions 62, 65, 547, and 550 each coordinate Ni(2+).

The protein belongs to the [NiFe]/[NiFeSe] hydrogenase large subunit family. Heterodimer of a large and a small subunit. It depends on Ni(2+) as a cofactor.

Its subcellular location is the cell membrane. It catalyses the reaction H2 + a menaquinone = a menaquinol. Its function is as follows. This enzyme recycles the H(2) produced by nitrogenase to increase the production of ATP and to protect nitrogenase against inhibition or damage by O(2) under carbon- or phosphate-limited conditions. The protein is Quinone-reactive Ni/Fe-hydrogenase large chain (hydB) of Wolinella succinogenes (strain ATCC 29543 / DSM 1740 / CCUG 13145 / JCM 31913 / LMG 7466 / NCTC 11488 / FDC 602W) (Vibrio succinogenes).